A 446-amino-acid chain; its full sequence is N-succinylarginine dihydrolase (446 aa).

Residues 19 to 28 (AGLSFGNVAS), Asn110, and 137 to 138 (HR) contribute to the substrate site. Residue Glu174 is part of the active site. Residue Arg213 coordinates substrate. The active site involves His249. Substrate contacts are provided by Asp251 and Asn364. Cys370 serves as the catalytic Nucleophile.

The protein belongs to the succinylarginine dihydrolase family. Homodimer.

It catalyses the reaction N(2)-succinyl-L-arginine + 2 H2O + 2 H(+) = N(2)-succinyl-L-ornithine + 2 NH4(+) + CO2. The protein operates within amino-acid degradation; L-arginine degradation via AST pathway; L-glutamate and succinate from L-arginine: step 2/5. In terms of biological role, catalyzes the hydrolysis of N(2)-succinylarginine into N(2)-succinylornithine, ammonia and CO(2). The sequence is that of N-succinylarginine dihydrolase from Burkholderia cenocepacia (strain HI2424).